A 224-amino-acid polypeptide reads, in one-letter code: Ribonuclease 3 (224 aa).

The 123-residue stretch at 5–127 (LERLCRRLNY…ILAAIYLDGG (123 aa)) folds into the RNase III domain. Glutamate 40 lines the Mg(2+) pocket. Aspartate 44 is an active-site residue. Mg(2+) is bound by residues aspartate 113 and glutamate 116. Glutamate 116 is a catalytic residue. One can recognise a DRBM domain in the interval 154 to 224 (DAKTQLQEFL…AKAMLEQLQG (71 aa)).

This sequence belongs to the ribonuclease III family. Homodimer. The cofactor is Mg(2+).

The protein resides in the cytoplasm. The enzyme catalyses Endonucleolytic cleavage to 5'-phosphomonoester.. Digests double-stranded RNA. Involved in the processing of primary rRNA transcript to yield the immediate precursors to the large and small rRNAs (23S and 16S). Processes some mRNAs, and tRNAs when they are encoded in the rRNA operon. Processes pre-crRNA and tracrRNA of type II CRISPR loci if present in the organism. The polypeptide is Ribonuclease 3 (Legionella pneumophila subsp. pneumophila (strain Philadelphia 1 / ATCC 33152 / DSM 7513)).